A 202-amino-acid polypeptide reads, in one-letter code: ATP-dependent Clp protease proteolytic subunit (202 aa).

S106 acts as the Nucleophile in catalysis. The active site involves H131.

It belongs to the peptidase S14 family. As to quaternary structure, fourteen ClpP subunits assemble into 2 heptameric rings which stack back to back to give a disk-like structure with a central cavity, resembling the structure of eukaryotic proteasomes.

It localises to the cytoplasm. The catalysed reaction is Hydrolysis of proteins to small peptides in the presence of ATP and magnesium. alpha-casein is the usual test substrate. In the absence of ATP, only oligopeptides shorter than five residues are hydrolyzed (such as succinyl-Leu-Tyr-|-NHMec, and Leu-Tyr-Leu-|-Tyr-Trp, in which cleavage of the -Tyr-|-Leu- and -Tyr-|-Trp bonds also occurs).. Functionally, cleaves peptides in various proteins in a process that requires ATP hydrolysis. Has a chymotrypsin-like activity. Plays a major role in the degradation of misfolded proteins. The chain is ATP-dependent Clp protease proteolytic subunit from Variovorax paradoxus (strain S110).